Reading from the N-terminus, the 459-residue chain is Cysteine--tRNA ligase (459 aa).

Residue Cys-29 participates in Zn(2+) binding. The 'HIGH' region motif lies at 31 to 41 (VTTYDYCHIGH). Zn(2+) is bound by residues Cys-210, His-235, and Glu-239. The 'KMSKS' region signature appears at 267 to 271 (KMSKS). Lys-270 is an ATP binding site.

This sequence belongs to the class-I aminoacyl-tRNA synthetase family. Monomer. Requires Zn(2+) as cofactor.

It is found in the cytoplasm. The catalysed reaction is tRNA(Cys) + L-cysteine + ATP = L-cysteinyl-tRNA(Cys) + AMP + diphosphate. The chain is Cysteine--tRNA ligase from Idiomarina loihiensis (strain ATCC BAA-735 / DSM 15497 / L2-TR).